The chain runs to 334 residues: 6-phosphogluconolactonase (334 aa).

The protein belongs to the cycloisomerase 2 family.

The catalysed reaction is 6-phospho-D-glucono-1,5-lactone + H2O = 6-phospho-D-gluconate + H(+). It functions in the pathway carbohydrate degradation; pentose phosphate pathway; D-ribulose 5-phosphate from D-glucose 6-phosphate (oxidative stage): step 2/3. In terms of biological role, catalyzes the hydrolysis of 6-phosphogluconolactone to 6-phosphogluconate. This is 6-phosphogluconolactonase from Yersinia pseudotuberculosis serotype O:1b (strain IP 31758).